A 447-amino-acid chain; its full sequence is NAD-dependent histone deacetylase HST3 (447 aa).

Residues methionine 1–proline 21 are disordered. The 329-residue stretch at leucine 35–glutamate 363 folds into the Deacetylase sirtuin-type domain. Residues glycine 60–tyrosine 79 and glutamine 151–aspartate 154 contribute to the NAD(+) site. The active-site Proton acceptor is histidine 187. The Zn(2+) site is built by cysteine 195, cysteine 198, cysteine 220, and cysteine 223. Residues glycine 282–serine 284, asparagine 312–threonine 314, and cysteine 333 each bind NAD(+). Basic and acidic residues predominate over residues serine 365–lysine 375. Disordered stretches follow at residues serine 365–aspartate 393 and lysine 411–serine 447.

This sequence belongs to the sirtuin family. Class I subfamily. Requires Zn(2+) as cofactor.

It localises to the cytoplasm. The protein resides in the nucleus. The enzyme catalyses N(6)-acetyl-L-lysyl-[protein] + NAD(+) + H2O = 2''-O-acetyl-ADP-D-ribose + nicotinamide + L-lysyl-[protein]. Its function is as follows. NAD-dependent histone deacetylase, which contributes together with HST4 to histone H3 'Lys-56' deacetylation, regulation of telomeric silencing, proper cell cycle progression, DNA damage control, DNA recombination, and genomic maintenance. The polypeptide is NAD-dependent histone deacetylase HST3 (HST3) (Saccharomyces cerevisiae (strain ATCC 204508 / S288c) (Baker's yeast)).